Here is a 244-residue protein sequence, read N- to C-terminus: Geranylgeranylglyceryl phosphate synthase (244 aa).

Mg(2+) is bound by residues Asp-20 and Ser-49. Sn-glycerol 1-phosphate is bound by residues 169–175 (YLEAGSG), 200–201 (GG), and 222–223 (GT).

The protein belongs to the GGGP/HepGP synthase family. Group II subfamily. Mg(2+) is required as a cofactor.

The protein localises to the cytoplasm. The enzyme catalyses sn-glycerol 1-phosphate + (2E,6E,10E)-geranylgeranyl diphosphate = sn-3-O-(geranylgeranyl)glycerol 1-phosphate + diphosphate. The protein operates within membrane lipid metabolism; glycerophospholipid metabolism. Functionally, prenyltransferase that catalyzes the transfer of the geranylgeranyl moiety of geranylgeranyl diphosphate (GGPP) to the C3 hydroxyl of sn-glycerol-1-phosphate (G1P). This reaction is the first ether-bond-formation step in the biosynthesis of archaeal membrane lipids. The chain is Geranylgeranylglyceryl phosphate synthase from Korarchaeum cryptofilum (strain OPF8).